Reading from the N-terminus, the 191-residue chain is Cathelicidin-related antimicrobial peptide Na_CRAMP (191 aa).

Residues Met-1–Ser-22 form the signal peptide. Residues Phe-23–Lys-161 constitute a propeptide that is removed on maturation. 2 disulfide bridges follow: Cys-81/Cys-92 and Cys-103/Cys-120. Positions Glu-126–Pro-154 are disordered. Residues Glu-140 to Pro-154 show a composition bias toward basic and acidic residues.

This sequence belongs to the cathelicidin family. Expressed by the venom gland.

The protein localises to the secreted. Its subcellular location is the target cell membrane. In terms of biological role, potent antimicrobial peptide against most of Gram-negative bacteria, some Gram-positive bacteria (Bacillus) and some fungi. Adopts an amphipathic alpha helical conformation, that may allow to partition into the target membrane. No hemolytic and cytotoxic activities have been observed on mammalian cells. This Naja atra (Chinese cobra) protein is Cathelicidin-related antimicrobial peptide Na_CRAMP.